The primary structure comprises 328 residues: MRQPHITALLLLPLLLRSGTEGAEAMRACGHPRMFNRMVGGEDALEGEWPWQVSIQRNGAHFCGGSLIAPTWVLTAAHCFSNTSDISIYQVLLGALKLQQPGPHALYVPVKRVKSHPEYQGMASSADVALVELQVPVTFTKYILPVCLPDPSVVFKSGMNCWVTGWGSPSEQDRLPNPRILQKLAVPLIDTPKCNLLYSKDAEADIQLKTIKDDMLCAGFAEGKKDACKGDSGGPLVCLVDQSWVQAGVISWGEGCARRNRPGVYIRVASHYQWIHQIIPELQFQGRAGSQQQQRDPRGWQPLAENSAPCLAAHAVLLALGALMLGIL.

Residues 1–22 (MRQPHITALLLLPLLLRSGTEG) form the signal peptide. A propeptide spans 23 to 37 (AEAMRACGHPRMFNR) (activation peptide). One can recognise a Peptidase S1 domain in the interval 38 to 280 (MVGGEDALEG…HYQWIHQIIP (243 aa)). Residues cysteine 63 and cysteine 79 are joined by a disulfide bond. Catalysis depends on histidine 78, which acts as the Charge relay system. Asparagine 82 is a glycosylation site (N-linked (GlcNAc...) asparagine). Aspartate 127 serves as the catalytic Charge relay system. 3 disulfides stabilise this stretch: cysteine 161–cysteine 238, cysteine 194–cysteine 217, and cysteine 228–cysteine 256. The Charge relay system role is filled by serine 232.

This sequence belongs to the peptidase S1 family.

Its subcellular location is the secreted. The polypeptide is Serine protease 27 (Prss27) (Rattus norvegicus (Rat)).